The chain runs to 650 residues: Chaperone protein DnaK (650 aa).

Phosphothreonine; by autocatalysis is present on Thr200. Residues 611–636 (AQQAGAAGAAGAAAEGASAQGGAQPA) are compositionally biased toward low complexity. The segment at 611–650 (AQQAGAAGAAGAAAEGASAQGGAQPADDVVDADFKEVKKD) is disordered.

It belongs to the heat shock protein 70 family.

Its function is as follows. Acts as a chaperone. This is Chaperone protein DnaK from Burkholderia mallei (strain NCTC 10247).